We begin with the raw amino-acid sequence, 650 residues long: Acetyl-coenzyme A synthetase (650 aa).

Residues arginine 191–arginine 194, threonine 311, and asparagine 335 each bind CoA. Residues glycine 387–proline 389, aspartate 411–threonine 416, aspartate 500, and arginine 515 each bind ATP. A CoA-binding site is contributed by serine 523. Arginine 526 is an ATP binding site. Residues valine 537, histidine 539, and valine 542 each coordinate Mg(2+). Arginine 584 lines the CoA pocket. An N6-acetyllysine modification is found at lysine 609.

Belongs to the ATP-dependent AMP-binding enzyme family. Mg(2+) serves as cofactor. Post-translationally, acetylated. Deacetylation by the SIR2-homolog deacetylase activates the enzyme.

The enzyme catalyses acetate + ATP + CoA = acetyl-CoA + AMP + diphosphate. Functionally, catalyzes the conversion of acetate into acetyl-CoA (AcCoA), an essential intermediate at the junction of anabolic and catabolic pathways. AcsA undergoes a two-step reaction. In the first half reaction, AcsA combines acetate with ATP to form acetyl-adenylate (AcAMP) intermediate. In the second half reaction, it can then transfer the acetyl group from AcAMP to the sulfhydryl group of CoA, forming the product AcCoA. The chain is Acetyl-coenzyme A synthetase from Shewanella baltica (strain OS195).